The primary structure comprises 454 residues: Cobyrinate a,c-diamide synthase (454 aa).

Positions 247-442 (KIGIAMDSAF…IHAHWASNPN (196 aa)) constitute a GATase cobBQ-type domain. Cys329 acts as the Nucleophile in catalysis.

It belongs to the CobB/CbiA family. Requires Mg(2+) as cofactor.

The catalysed reaction is cob(II)yrinate + 2 L-glutamine + 2 ATP + 2 H2O = cob(II)yrinate a,c diamide + 2 L-glutamate + 2 ADP + 2 phosphate + 2 H(+). Its pathway is cofactor biosynthesis; adenosylcobalamin biosynthesis; cob(II)yrinate a,c-diamide from sirohydrochlorin (anaerobic route): step 10/10. Its function is as follows. Catalyzes the ATP-dependent amidation of the two carboxylate groups at positions a and c of cobyrinate, using either L-glutamine or ammonia as the nitrogen source. The sequence is that of Cobyrinate a,c-diamide synthase from Leptospira interrogans serogroup Icterohaemorrhagiae serovar copenhageni (strain Fiocruz L1-130).